We begin with the raw amino-acid sequence, 239 residues long: Gag polyprotein (239 aa).

Residues 124–141 (KGEEVGETTAQRDAKMAP) show a composition bias toward basic and acidic residues. The interval 124–144 (KGEEVGETTAQRDAKMAPEKM) is disordered. A PPXY motif motif is present at residues 172–175 (PPPY). The interval 184–214 (LAGVGEQQGQGGDTPWGAEQPRAEPGHAGLA) is disordered.

It localises to the virion. The chain is Gag polyprotein (ev-1) from Galliformes.